We begin with the raw amino-acid sequence, 232 residues long: Small ribosomal subunit protein uS5 (232 aa).

The disordered stretch occupies residues 1–47 (MAAEVTETAQPVETAASTDNNREQREPRRGGRERNPNRDRGNRDADK). The span at 7–19 (ETAQPVETAASTD) shows a compositional bias: polar residues. Residues 20–47 (NNREQREPRRGGRERNPNRDRGNRDADK) show a composition bias toward basic and acidic residues. The region spanning 50–113 (FLERVVTINR…EEAKKNFFRV (64 aa)) is the S5 DRBM domain.

The protein belongs to the universal ribosomal protein uS5 family. Part of the 30S ribosomal subunit. Contacts proteins S4 and S8.

Its function is as follows. With S4 and S12 plays an important role in translational accuracy. In terms of biological role, located at the back of the 30S subunit body where it stabilizes the conformation of the head with respect to the body. The chain is Small ribosomal subunit protein uS5 from Leifsonia xyli subsp. xyli (strain CTCB07).